Here is a 557-residue protein sequence, read N- to C-terminus: UvrABC system protein C (557 aa).

Residues 14–89 (EEPGVYIFKN…IKKYRPKYNV (76 aa)) enclose the GIY-YIG domain. Positions 194-229 (EEVFDYLKEKMETHSRMLDFENAAKYRDLLLNLSNV) constitute a UVR domain.

Belongs to the UvrC family. As to quaternary structure, interacts with UvrB in an incision complex.

Its subcellular location is the cytoplasm. Its function is as follows. The UvrABC repair system catalyzes the recognition and processing of DNA lesions. UvrC both incises the 5' and 3' sides of the lesion. The N-terminal half is responsible for the 3' incision and the C-terminal half is responsible for the 5' incision. The polypeptide is UvrABC system protein C (Thermotoga petrophila (strain ATCC BAA-488 / DSM 13995 / JCM 10881 / RKU-1)).